A 261-amino-acid polypeptide reads, in one-letter code: Non-structural protein 2a (261 aa).

This sequence belongs to the coronaviruses ns2a protein family.

It localises to the host cytoplasm. Its function is as follows. Not essential for virus replication in transformed murine cells. The sequence is that of Non-structural protein 2a from Mus musculus (Mouse).